The following is a 307-amino-acid chain: Acetaldehyde dehydrogenase (307 aa).

Residue 12-15 (SGNI) participates in NAD(+) binding. Cys127 serves as the catalytic Acyl-thioester intermediate. Residues 158–166 (SAGPGTRQN) and Asn278 contribute to the NAD(+) site.

This sequence belongs to the acetaldehyde dehydrogenase family. In terms of assembly, monomer. Can also form a heterotetramer composed of two aldolase (TTHB246) and two dehydrogenase (TTHB247) subunits. Upon complex formation, the aldolase shows a 5-fold increase in substrate affinity, while the dehydrogenase shows a 3-fold decrease; the kcat values of each enzyme are reduced by 2-fold when they are in a complex.

It carries out the reaction acetaldehyde + NAD(+) + CoA = acetyl-CoA + NADH + H(+). It catalyses the reaction propanal + NAD(+) + CoA = propanoyl-CoA + NADH + H(+). Functionally, catalyzes the conversion of acetaldehyde or propanal to acetyl-CoA or propanoyl-CoA, respectively, using NAD(+) and coenzyme A. The aldehyde substrates can be directly channeled from the aldolase TTHB246 to the dehydrogenase TTHB247. Is the final enzyme in the meta-cleavage pathway for the degradation of aromatic compounds. This Thermus thermophilus (strain ATCC 27634 / DSM 579 / HB8) protein is Acetaldehyde dehydrogenase.